The sequence spans 146 residues: CysO-cysteine peptidase (146 aa).

The 124-residue stretch at Leu-11–Ala-134 folds into the MPN domain. Zn(2+)-binding residues include His-88, His-90, and Asp-101. Residues His-88–Asp-101 carry the JAMM motif motif.

It belongs to the peptidase M67A family. Zn(2+) is required as a cofactor.

The catalysed reaction is [CysO sulfur-carrier protein]-Gly-NH-CH2-C(O)-S-L-Cys + H2O = [CysO sulfur-carrier protein]-C-terminal Gly-Gly + L-cysteine + H(+). The protein operates within amino-acid biosynthesis; L-cysteine biosynthesis. Functionally, protease that hydrolyzes the covalent CysO-cysteine adduct synthesized by CysM to release L-cysteine and regenerate CysO. The chain is CysO-cysteine peptidase (mec) from Mycobacterium bovis (strain ATCC BAA-935 / AF2122/97).